A 749-amino-acid polypeptide reads, in one-letter code: Amyloid-beta A4 precursor protein-binding family A member 2 (749 aa).

Disordered stretches follow at residues methionine 1–glutamate 94, aspartate 130–glutamate 220, and serine 238–glutamate 344. Serine 11 carries the phosphoserine modification. Residues glycine 70–threonine 80 show a composition bias toward polar residues. 2 stretches are compositionally biased toward acidic residues: residues serine 81–glutamate 94 and threonine 131–threonine 142. Residues histidine 185–alanine 270 are STXBP1-binding. Serine 208 is modified (phosphoserine). The segment covering serine 238–glutamate 247 has biased composition (polar residues). Basic and acidic residues predominate over residues arginine 305–histidine 315. The region spanning aspartate 368–aspartate 555 is the PID domain. PDZ domains follow at residues glutamate 568 to cysteine 654 and threonine 659 to alanine 734.

In terms of assembly, part of a multimeric complex containing STXBP1 and syntaxin-1. Binds to the cytoplasmic domain of amyloid-beta protein, and to the nuclear factor NF-kappa-B/p65 via its PDZ domain. Interacts with the N-terminal domain of NECAB3. Brain.

Its function is as follows. Putative function in synaptic vesicle exocytosis by binding to STXBP1, an essential component of the synaptic vesicle exocytotic machinery. May modulate processing of the amyloid-beta precursor protein (APP) and hence formation of APP-beta. This is Amyloid-beta A4 precursor protein-binding family A member 2 (APBA2) from Homo sapiens (Human).